The chain runs to 338 residues: Secretion system apparatus protein SsaL (338 aa).

The polypeptide is Secretion system apparatus protein SsaL (ssaL) (Salmonella typhimurium (strain LT2 / SGSC1412 / ATCC 700720)).